The primary structure comprises 543 residues: Transmembrane protease serine 13 (543 aa).

Disordered stretches follow at residues 1-96 (MDRG…TRVY) and 109-129 (RASPARSAPATRATRESPGLS). Residues 1-143 (MDRGSHRNSS…SWQETQRQLP (143 aa)) are Cytoplasmic-facing. 2 tandem repeats follow at residues 14–17 (TPPQ) and 18–22 (ASPAR). Positions 14–49 (TPPQASPARTSPARAPPQASPARTPPQASPARTPPQ) are 4 X 4 AA repeats of T-P-P-Q. Residues 18-69 (ASPARTSPARAPPQASPARTPPQASPARTPPQASPARAPPPQASPARASPAR) are 8 X 5 AA repeats of A-S-P-A-R. The 2-2; approximate repeat unit spans residues 23–27 (TSPAR). The span at 27–60 (RAPPQASPARTPPQASPARTPPQASPARAPPPQA) shows a compositional bias: pro residues. One copy of the 1-2; approximate repeat lies at 28-31 (APPQ). 5 tandem repeats follow at residues 32–36 (ASPAR), 37–40 (TPPQ), 41–45 (ASPAR), 46–49 (TPPQ), and 50–54 (ASPAR). Residues 55 to 59 (APPPQ) form a 2-6; approximate repeat. Tandem repeats lie at residues 60 to 64 (ASPAR) and 65 to 69 (ASPAR). Composition is skewed to low complexity over residues 61–94 (SPARASPARAPPSRSSSGRSSSARSASTTSSPTR) and 109–120 (RASPARSAPATR). The helical; Signal-anchor for type II membrane protein transmembrane segment at 144–164 (LIGCVILLISLVISLILLFYF) threads the bilayer. The Extracellular portion of the chain corresponds to 165–543 (WRGHTGIKYK…MESEVRFRKS (379 aa)). The region spanning 180 to 202 (CPIHAVRCDGVVDCKMKSDELGC) is the LDL-receptor class A domain. In terms of domain architecture, SRCR spans 199 to 301 (ELGCVRFDWD…HCGLRAMTGR (103 aa)). Cystine bridges form between Cys-226/Cys-290, Cys-239/Cys-293, and Cys-327/Cys-343. 2 N-linked (GlcNAc...) asparagine glycosylation sites follow: Asn-231 and Asn-268. The region spanning 302–535 (IVGGALTSES…VLPWIYRKME (234 aa)) is the Peptidase S1 domain. Catalysis depends on His-342, which acts as the Charge relay system. N-linked (GlcNAc...) asparagine glycosylation is present at Asn-381. The Charge relay system role is filled by Asp-390. Residue Asn-421 is glycosylated (N-linked (GlcNAc...) asparagine). Disulfide bonds link Cys-424-Cys-493, Cys-456-Cys-472, and Cys-483-Cys-511. Ser-487 functions as the Charge relay system in the catalytic mechanism.

Belongs to the peptidase S1 family. In terms of assembly, interacts with SPINT1/HAI-1; the interaction promotes the phosphorylation and cell membrane localization of TMPRSS13. Interacts with SPINT2/HAI-2; the interaction promotes the phosphorylation and cell membrane localization of TMPRSS13. The inactive zymogen is post-translationally modified and then trafficked to the cell surface, whereby it undergoes autocatalytic cleavage resulting in an activated form that is released extracellularly. In terms of processing, phosphorylation is required for localization at the cell surface. Phosphorylation increases following inhibition of protease activity by SPINT2/HAI-2. Expressed in the suprabasal squamous epithelium of the epidermis, hair follicles, oral epithelium, cornea, upper digestive tract, transitional epithelium of the bladder, prostate, heart, intestine, kidney and thymus.

It localises to the cell membrane. The protein localises to the secreted. Its subcellular location is the cytoplasm. Its activity is regulated as follows. Cleavage of HGF is inhibited by SPINT1/HAI-1 via the BPTI/Kunitz inhibitor 1 domain. In terms of biological role, serine protease. Cleaves the proform of PRSS8/prostasin to form the active protein. Cleaves the proform of HGF to form the active protein which promotes MAPK signaling. Promotes the formation of the stratum corneum and subsequently the epidermal barrier in embryos. The chain is Transmembrane protease serine 13 (Tmprss13) from Mus musculus (Mouse).